We begin with the raw amino-acid sequence, 270 residues long: Aliphatic sulfonates import ATP-binding protein SsuB 3 (270 aa).

One can recognise an ABC transporter domain in the interval 17–238 (LAVRNLKKAF…VRGSHRLAAL (222 aa)). 49–56 (GRSGCGKS) is an ATP binding site.

The protein belongs to the ABC transporter superfamily. Aliphatic sulfonates importer (TC 3.A.1.17.2) family. As to quaternary structure, the complex is composed of two ATP-binding proteins (SsuB), two transmembrane proteins (SsuC) and a solute-binding protein (SsuA).

The protein resides in the cell inner membrane. The enzyme catalyses ATP + H2O + aliphatic sulfonate-[sulfonate-binding protein]Side 1 = ADP + phosphate + aliphatic sulfonateSide 2 + [sulfonate-binding protein]Side 1.. Part of the ABC transporter complex SsuABC involved in aliphatic sulfonates import. Responsible for energy coupling to the transport system. The chain is Aliphatic sulfonates import ATP-binding protein SsuB 3 from Pseudomonas savastanoi pv. phaseolicola (strain 1448A / Race 6) (Pseudomonas syringae pv. phaseolicola (strain 1448A / Race 6)).